We begin with the raw amino-acid sequence, 681 residues long: Methionine--tRNA ligase (681 aa).

A 'HIGH' region motif is present at residues 27-37 (DYANGTPHIGH). The 'KMSKS' region signature appears at 316-320 (KMGKS). Residue Lys319 participates in ATP binding. The interval 522-571 (FPKPEPKADETKNAEAKPPKPQAKKEKKTVTDTAPAKTTEQKPEAAAPAQ) is disordered. Residues 525 to 539 (PEPKADETKNAEAKP) show a composition bias toward basic and acidic residues. The tRNA-binding domain maps to 580–681 (DFAKIDLRIA…LDLPSGTKVR (102 aa)).

It belongs to the class-I aminoacyl-tRNA synthetase family. MetG type 2B subfamily. Homodimer.

Its subcellular location is the cytoplasm. It carries out the reaction tRNA(Met) + L-methionine + ATP = L-methionyl-tRNA(Met) + AMP + diphosphate. Is required not only for elongation of protein synthesis but also for the initiation of all mRNA translation through initiator tRNA(fMet) aminoacylation. The polypeptide is Methionine--tRNA ligase (metG) (Deinococcus radiodurans (strain ATCC 13939 / DSM 20539 / JCM 16871 / CCUG 27074 / LMG 4051 / NBRC 15346 / NCIMB 9279 / VKM B-1422 / R1)).